The following is a 390-amino-acid chain: Galactokinase (390 aa).

E34 to D37 is a substrate binding site. ATP-binding positions include S68 and G122–S128. 2 residues coordinate Mg(2+): S128 and E160. Residue D172 is the Proton acceptor of the active site. Y221 is a binding site for substrate.

This sequence belongs to the GHMP kinase family. GalK subfamily.

It is found in the cytoplasm. It catalyses the reaction alpha-D-galactose + ATP = alpha-D-galactose 1-phosphate + ADP + H(+). It functions in the pathway carbohydrate metabolism; galactose metabolism. Catalyzes the transfer of the gamma-phosphate of ATP to D-galactose to form alpha-D-galactose-1-phosphate (Gal-1-P). The sequence is that of Galactokinase from Chloroflexus aggregans (strain MD-66 / DSM 9485).